We begin with the raw amino-acid sequence, 964 residues long: Vitamin B12-dependent ribonucleotide reductase (964 aa).

The tract at residues 1–21 is disordered; the sequence is MTETASGPARGSRAKGTKAKG. Positions 12–21 are enriched in basic residues; it reads SRAKGTKAKG. Substrate-binding positions include serine 142, 158–159, glycine 187, 363–367, and 553–557; these read AC, NPCSE, and PTGTI. An intrachain disulfide couples cysteine 159 to cysteine 376. Asparagine 363 functions as the Proton acceptor in the catalytic mechanism. Cysteine 365 serves as the catalytic Cysteine radical intermediate. The Proton acceptor role is filled by glutamate 367.

Belongs to the ribonucleoside diphosphate reductase class-2 family. The cofactor is adenosylcob(III)alamin.

It catalyses the reaction a 2'-deoxyribonucleoside 5'-diphosphate + [thioredoxin]-disulfide + H2O = a ribonucleoside 5'-diphosphate + [thioredoxin]-dithiol. Its function is as follows. Catalyzes the reduction of ribonucleotides to deoxyribonucleotides. May function to provide a pool of deoxyribonucleotide precursors for DNA repair during oxygen limitation and/or for immediate growth after restoration of oxygen. This Streptomyces avermitilis (strain ATCC 31267 / DSM 46492 / JCM 5070 / NBRC 14893 / NCIMB 12804 / NRRL 8165 / MA-4680) protein is Vitamin B12-dependent ribonucleotide reductase (nrdJ).